A 366-amino-acid chain; its full sequence is Alanine racemase (366 aa).

The active-site Proton acceptor; specific for D-alanine is Lys-35. Lys-35 carries the post-translational modification N6-(pyridoxal phosphate)lysine. Arg-130 provides a ligand contact to substrate. The Proton acceptor; specific for L-alanine role is filled by Tyr-254. Position 302 (Met-302) interacts with substrate.

The protein belongs to the alanine racemase family. The cofactor is pyridoxal 5'-phosphate.

It catalyses the reaction L-alanine = D-alanine. It participates in amino-acid biosynthesis; D-alanine biosynthesis; D-alanine from L-alanine: step 1/1. Functionally, catalyzes the interconversion of L-alanine and D-alanine. May also act on other amino acids. The protein is Alanine racemase (alr) of Variovorax paradoxus (strain S110).